A 276-amino-acid chain; its full sequence is Undecaprenyl-diphosphatase (276 aa).

Helical transmembrane passes span 43 to 63, 85 to 105, 109 to 129, 183 to 203, 218 to 238, and 254 to 274; these read RAMA…VWEF, LNLL…ADTI, LFNA…MLWA, AATE…AVYS, VFAI…RALL, and IAFG…WASA.

This sequence belongs to the UppP family.

It is found in the cell inner membrane. It carries out the reaction di-trans,octa-cis-undecaprenyl diphosphate + H2O = di-trans,octa-cis-undecaprenyl phosphate + phosphate + H(+). In terms of biological role, catalyzes the dephosphorylation of undecaprenyl diphosphate (UPP). Confers resistance to bacitracin. This chain is Undecaprenyl-diphosphatase, found in Pseudomonas syringae pv. tomato (strain ATCC BAA-871 / DC3000).